Reading from the N-terminus, the 156-residue chain is Mediator of RNA polymerase II transcription subunit 28 (156 aa).

Residues 1–38 (MDYQQKPPQSSDPSPSPPDRPPGIRSPETPSNNQNNDI) form a disordered region. A coiled-coil region spans residues 104–156 (PSRAESLKKDIAVMEEELKTKDELIKKHMRLFQESQKLVKEQIEKHRDELEKV).

Belongs to the Mediator complex subunit 28 family. As to quaternary structure, dimers. Component of the Mediator complex. Interacts with GEBPL.

It localises to the nucleus. In terms of biological role, component of the Mediator complex, a coactivator involved in the regulated transcription of nearly all RNA polymerase II-dependent genes. Mediator functions as a bridge to convey information from gene-specific regulatory proteins to the basal RNA polymerase II transcription machinery. The Mediator complex, having a compact conformation in its free form, is recruited to promoters by direct interactions with regulatory proteins and serves for the assembly of a functional pre-initiation complex with RNA polymerase II and the general transcription factors. In Arabidopsis thaliana (Mouse-ear cress), this protein is Mediator of RNA polymerase II transcription subunit 28.